We begin with the raw amino-acid sequence, 399 residues long: Glycerol-1-phosphate dehydrogenase [NAD(P)+] (399 aa).

Residues Asp-56, 118–122 (GTIHD), and 140–143 (TAPS) each bind NAD(+). Asp-145 contributes to the substrate binding site. An NAD(+)-binding site is contributed by Ser-149. Substrate is bound at residue Asp-192. Residues Asp-192 and His-272 each contribute to the Ni(2+) site. His-276 serves as a coordination point for substrate. His-292 serves as a coordination point for Ni(2+).

It belongs to the glycerol-1-phosphate dehydrogenase family. As to quaternary structure, homodimer. It depends on Ni(2+) as a cofactor.

It is found in the cytoplasm. It carries out the reaction sn-glycerol 1-phosphate + NAD(+) = dihydroxyacetone phosphate + NADH + H(+). The catalysed reaction is sn-glycerol 1-phosphate + NADP(+) = dihydroxyacetone phosphate + NADPH + H(+). Its function is as follows. Catalyzes the NAD(P)H-dependent reduction of dihydroxyacetonephosphate (DHAP or glycerone phosphate) to glycerol 1-phosphate (G1P). The G1P thus generated is probably used for the synthesis of phosphoglycerolipids in Gram-positive bacterial species. The sequence is that of Glycerol-1-phosphate dehydrogenase [NAD(P)+] from Halalkalibacterium halodurans (strain ATCC BAA-125 / DSM 18197 / FERM 7344 / JCM 9153 / C-125) (Bacillus halodurans).